The following is a 60-amino-acid chain: Large ribosomal subunit protein uL30 (60 aa).

It belongs to the universal ribosomal protein uL30 family. As to quaternary structure, part of the 50S ribosomal subunit.

The protein is Large ribosomal subunit protein uL30 of Streptococcus pneumoniae (strain Hungary19A-6).